Here is a 507-residue protein sequence, read N- to C-terminus: 3-[(3aS,4S,7aS)-7a-methyl-1,5-dioxo-octahydro-1H-inden-4-yl]propanoyl:CoA ligase (507 aa).

ATP-binding positions include 177-185, Asp391, Arg406, and Lys497; that span reads TSGTTGRSK.

This sequence belongs to the ATP-dependent AMP-binding enzyme family.

The enzyme catalyses 3-[(3aS,4S,7aS)-7a-methyl-1,5-dioxo-octahydro-1H-inden-4-yl]propanoate + ATP + CoA = 3-[(3aS,4S,7aS)-7a-methyl-1,5-dioxo-octahydro-1H-inden-4-yl]propanoyl-CoA + AMP + diphosphate. It catalyses the reaction 5-hydroxy-3-[(3aS,4S,5R,7aS)-7a-methyl-1,5-dioxo-octahydro-1H-inden-4-yl]propanoate + ATP + CoA = 3-[(3aS,4S,5R,7aS)-5-hydroxy-7a-methyl-1-oxo-octahydro-1H-inden-4-yl]propanoyl-CoA + AMP + diphosphate. Involved in the catabolism of the rings C and D of cholesterol. Catalyzes the ATP-dependent CoA thioesterification of 3aalpha-H-4alpha(3'-propanoate)-7abeta-methylhexahydro-1,5-indanedione (HIP) to yield HIP-CoA. It can also use the hydroxylated analogs of HIP, 5alpha-OH HIP and 1beta-OH HIP. It requires that the side chain at C17 is completely removed. This Mycobacterium tuberculosis (strain ATCC 25618 / H37Rv) protein is 3-[(3aS,4S,7aS)-7a-methyl-1,5-dioxo-octahydro-1H-inden-4-yl]propanoyl:CoA ligase.